We begin with the raw amino-acid sequence, 575 residues long: Potassium-transporting ATPase potassium-binding subunit (575 aa).

12 consecutive transmembrane segments (helical) span residues 4-24, 61-81, 133-153, 180-200, 258-278, 289-309, 344-364, 372-392, 394-414, 431-451, 499-519, and 545-565; these read SAWGLLALFLAALLVLAWPVG, LRYAIALLAFNAVGAVFVYAL, GLAVQNFFSAATGIAVAFALI, LWVLVPLSFVLAVFFVSQGVI, LANLLQMIAVFLIPAALCFAF, WAVLAAMTVMFVAAVMVVIPA, IDASALFAAVTTAASCGAVIA, LGGMVPMVLMQLGEVVFGGVG, GLYGMLIFAMLAVFIAGLMIG, LISIAILVTPVLVLAGTAVAV, LLGLAMWLGRFAVIVPVLAIA, and LLIGTVLLVGLLNYVPALALG.

The protein belongs to the KdpA family. In terms of assembly, the system is composed of three essential subunits: KdpA, KdpB and KdpC.

It localises to the cell inner membrane. Functionally, part of the high-affinity ATP-driven potassium transport (or Kdp) system, which catalyzes the hydrolysis of ATP coupled with the electrogenic transport of potassium into the cytoplasm. This subunit binds the periplasmic potassium ions and delivers the ions to the membrane domain of KdpB through an intramembrane tunnel. This chain is Potassium-transporting ATPase potassium-binding subunit, found in Variovorax paradoxus (strain S110).